The chain runs to 27 residues: uncharacterized protein (27 aa).

The protein resides in the plastid. The protein localises to the chloroplast. This is an uncharacterized protein from Anthoceros angustus (Hornwort).